The primary structure comprises 648 residues: Threonine--tRNA ligase (648 aa).

The TGS domain occupies 1–61; sequence MINITFPDGA…TEDGSIEIVT (61 aa). A catalytic region spans residues 242-540; that stretch reads DHRKLGKELD…LIENYKGAFP (299 aa). Residues Cys-336, His-387, and His-517 each contribute to the Zn(2+) site.

The protein belongs to the class-II aminoacyl-tRNA synthetase family. In terms of assembly, homodimer. Zn(2+) serves as cofactor.

Its subcellular location is the cytoplasm. The catalysed reaction is tRNA(Thr) + L-threonine + ATP = L-threonyl-tRNA(Thr) + AMP + diphosphate + H(+). Functionally, catalyzes the attachment of threonine to tRNA(Thr) in a two-step reaction: L-threonine is first activated by ATP to form Thr-AMP and then transferred to the acceptor end of tRNA(Thr). Also edits incorrectly charged L-seryl-tRNA(Thr). In Streptococcus thermophilus (strain ATCC BAA-250 / LMG 18311), this protein is Threonine--tRNA ligase.